We begin with the raw amino-acid sequence, 338 residues long: Ketol-acid reductoisomerase (NADP(+)) (338 aa).

Positions 1-181 constitute a KARI N-terminal Rossmann domain; it reads MQVYYDKDCD…GGGRTGIIET (181 aa). Residues 24-27, Arg47, Ser50, Ser52, and 82-85 contribute to the NADP(+) site; these read FGSQ and DEFQ. His107 is a catalytic residue. An NADP(+)-binding site is contributed by Gly133. A KARI C-terminal knotted domain is found at 182 to 327; the sequence is TFRDECETDL…RKLRAMMPWI (146 aa). Mg(2+) contacts are provided by Asp190, Glu194, Glu226, and Glu230. Substrate is bound at residue Ser251.

It belongs to the ketol-acid reductoisomerase family. Requires Mg(2+) as cofactor.

The enzyme catalyses (2R)-2,3-dihydroxy-3-methylbutanoate + NADP(+) = (2S)-2-acetolactate + NADPH + H(+). It catalyses the reaction (2R,3R)-2,3-dihydroxy-3-methylpentanoate + NADP(+) = (S)-2-ethyl-2-hydroxy-3-oxobutanoate + NADPH + H(+). Its pathway is amino-acid biosynthesis; L-isoleucine biosynthesis; L-isoleucine from 2-oxobutanoate: step 2/4. It participates in amino-acid biosynthesis; L-valine biosynthesis; L-valine from pyruvate: step 2/4. Its function is as follows. Involved in the biosynthesis of branched-chain amino acids (BCAA). Catalyzes an alkyl-migration followed by a ketol-acid reduction of (S)-2-acetolactate (S2AL) to yield (R)-2,3-dihydroxy-isovalerate. In the isomerase reaction, S2AL is rearranged via a Mg-dependent methyl migration to produce 3-hydroxy-3-methyl-2-ketobutyrate (HMKB). In the reductase reaction, this 2-ketoacid undergoes a metal-dependent reduction by NADPH to yield (R)-2,3-dihydroxy-isovalerate. This Hydrogenovibrio crunogenus (strain DSM 25203 / XCL-2) (Thiomicrospira crunogena) protein is Ketol-acid reductoisomerase (NADP(+)).